The following is a 453-amino-acid chain: UDP-glycosyltransferase 79B3 (453 aa).

UDP-alpha-D-glucose contacts are provided by residues S266, V325–Q327, H342–E350, and L364–Q367.

Belongs to the UDP-glycosyltransferase family.

The polypeptide is UDP-glycosyltransferase 79B3 (UGT79B3) (Arabidopsis thaliana (Mouse-ear cress)).